An 889-amino-acid polypeptide reads, in one-letter code: Heat shock protein 70 homolog LHS1 (889 aa).

An N-terminal signal peptide occupies residues 1-15; it reads MKLSILFLFAIAVQA. 7 N-linked (GlcNAc...) asparagine glycosylation sites follow: Asn111, Asn366, Asn462, Asn502, Asn515, Asn716, and Asn752. Residues 811-889 are disordered; the sequence is IKKQEKQNEN…SAGNVFDDEL (79 aa). Composition is skewed to acidic residues over residues 820 to 833 and 868 to 889; these read NEEN…DEDE and DEED…DDEL. Positions 886 to 889 match the Prevents secretion from ER motif; it reads DDEL.

Belongs to the heat shock protein 70 family.

Its subcellular location is the endoplasmic reticulum lumen. The enzyme catalyses ATP + H2O = ADP + phosphate + H(+). Its function is as follows. Chaperone required for protein translocation and folding in the endoplasmic reticulum. The polypeptide is Heat shock protein 70 homolog LHS1 (LHS1) (Candida glabrata (strain ATCC 2001 / BCRC 20586 / JCM 3761 / NBRC 0622 / NRRL Y-65 / CBS 138) (Yeast)).